The following is a 297-amino-acid chain: PAK4-inhibitor INKA2 (297 aa).

Disordered stretches follow at residues 82 to 109, 175 to 200, and 234 to 285; these read GRGP…PSHR, LEKG…PQEL, and TPMV…LEHS. The segment covering 92 to 102 has biased composition (low complexity); the sequence is SPSSQPSLGSS. The tract at residues 137–180 is inka box; it reads EPDDWTSTLMSRGRNRQPLVLGDNVFADLVGNWLDLPELEKGGE. The segment covering 244 to 253 has biased composition (basic residues); that stretch reads RSQKVKKRSL.

Belongs to the INKA family. As to quaternary structure, interacts with PAK4.

It localises to the nucleus. Functionally, inhibitor of the serine/threonine-protein kinase PAK4. Acts by binding PAK4 in a substrate-like manner, inhibiting the protein kinase activity. This chain is PAK4-inhibitor INKA2, found in Homo sapiens (Human).